Reading from the N-terminus, the 221-residue chain is MANVTLNVTDNQGKATGTVDAPAEIFGFSAEEVQSRIPLIHQVVIAQLAAARQGTHATKTRGMVSGGGRKPWKQKGTGRARQGSIRAPQWYHGGTVFGPQPRDYSQRTPKKMKAAALKYVLSDRANAGHVAVVDFGVSEAPSTKAAVAALTPVTENKFTTVVLSRENVNEWLSVRNIPTVHPIFADQLNTYDVVTAQYVVFSKEGFDAFLAAKAEPAAKEA.

A disordered region spans residues 56–83; sequence HATKTRGMVSGGGRKPWKQKGTGRARQG.

It belongs to the universal ribosomal protein uL4 family. In terms of assembly, part of the 50S ribosomal subunit.

Its function is as follows. One of the primary rRNA binding proteins, this protein initially binds near the 5'-end of the 23S rRNA. It is important during the early stages of 50S assembly. It makes multiple contacts with different domains of the 23S rRNA in the assembled 50S subunit and ribosome. In terms of biological role, forms part of the polypeptide exit tunnel. This Bifidobacterium adolescentis (strain ATCC 15703 / DSM 20083 / NCTC 11814 / E194a) protein is Large ribosomal subunit protein uL4.